Consider the following 155-residue polypeptide: Cytochrome P450 (155 aa).

C99 is a binding site for heme.

This sequence belongs to the cytochrome P450 family. Heme serves as cofactor.

The chain is Cytochrome P450 from Helianthus annuus (Common sunflower).